Reading from the N-terminus, the 406-residue chain is Probable 2,3-bisphosphoglycerate-independent phosphoglycerate mutase (406 aa).

This sequence belongs to the BPG-independent phosphoglycerate mutase family. A-PGAM subfamily.

It catalyses the reaction (2R)-2-phosphoglycerate = (2R)-3-phosphoglycerate. It functions in the pathway carbohydrate degradation; glycolysis; pyruvate from D-glyceraldehyde 3-phosphate: step 3/5. Catalyzes the interconversion of 2-phosphoglycerate and 3-phosphoglycerate. The polypeptide is Probable 2,3-bisphosphoglycerate-independent phosphoglycerate mutase (Thermus thermophilus (strain ATCC BAA-163 / DSM 7039 / HB27)).